The following is a 76-amino-acid chain: Small ribosomal subunit protein bS18 (76 aa).

This sequence belongs to the bacterial ribosomal protein bS18 family. Part of the 30S ribosomal subunit. Forms a tight heterodimer with protein bS6.

Functionally, binds as a heterodimer with protein bS6 to the central domain of the 16S rRNA, where it helps stabilize the platform of the 30S subunit. The protein is Small ribosomal subunit protein bS18 of Petrotoga mobilis (strain DSM 10674 / SJ95).